Here is a 60-residue protein sequence, read N- to C-terminus: Single-pass membrane and coiled-coil domain-containing protein 4 homolog (60 aa).

The interval Met1 to Glu22 is disordered. Residues Gln8–Glu22 are compositionally biased toward basic and acidic residues. Residues Gln8–Val34 are a coiled coil. Residues Leu30–Phe50 form a helical membrane-spanning segment.

Belongs to the SMCO4 family.

The protein resides in the membrane. This chain is Single-pass membrane and coiled-coil domain-containing protein 4 homolog, found in Culex quinquefasciatus (Southern house mosquito).